We begin with the raw amino-acid sequence, 108 residues long: uncharacterized protein (108 aa).

Residues 59–81 form a helical membrane-spanning segment; that stretch reads NIVIILWKIMVVIISSIIHRTYI.

It is found in the membrane. This is an uncharacterized protein from Rickettsia conorii (strain ATCC VR-613 / Malish 7).